A 537-amino-acid chain; its full sequence is Glucans biosynthesis protein D (537 aa).

Positions 1-30 form a signal peptide, tat-type signal; it reads MLMYRRDFLKSVTAAWVAFGLPNPLGGAFA.

It belongs to the OpgD/OpgG family. Predicted to be exported by the Tat system. The position of the signal peptide cleavage has not been experimentally proven.

Its subcellular location is the periplasm. The protein operates within glycan metabolism; osmoregulated periplasmic glucan (OPG) biosynthesis. Probably involved in the control of the structural glucose backbone of osmoregulated periplasmic glucans (OPGs). This is Glucans biosynthesis protein D from Xylella fastidiosa (strain M12).